The sequence spans 229 residues: Cytidylate kinase (229 aa).

12 to 20 lines the ATP pocket; sequence GPSGAGKGT.

Belongs to the cytidylate kinase family. Type 1 subfamily.

The protein localises to the cytoplasm. It carries out the reaction CMP + ATP = CDP + ADP. It catalyses the reaction dCMP + ATP = dCDP + ADP. The polypeptide is Cytidylate kinase (Pseudomonas paraeruginosa (strain DSM 24068 / PA7) (Pseudomonas aeruginosa (strain PA7))).